The primary structure comprises 634 residues: Chaperone protein DnaK (634 aa).

The residue at position 198 (threonine 198) is a Phosphothreonine; by autocatalysis. A disordered region spans residues 599–634 (KQTQEGAEAASEAGEQSAGDEGVVDAEFEEVDEQNK). A compositionally biased stretch (low complexity) spans 602-619 (QEGAEAASEAGEQSAGDE). A compositionally biased stretch (acidic residues) spans 620–634 (GVVDAEFEEVDEQNK).

The protein belongs to the heat shock protein 70 family.

Its function is as follows. Acts as a chaperone. This Syntrophotalea carbinolica (strain DSM 2380 / NBRC 103641 / GraBd1) (Pelobacter carbinolicus) protein is Chaperone protein DnaK.